The sequence spans 905 residues: Microtubule-associated protein 10 (905 aa).

Disordered regions lie at residues 30 to 51 (AAAV…SSPR), 199 to 235 (TRTG…KPLG), 329 to 362 (APEE…AHEH), 434 to 458 (SPES…GGCE), 547 to 586 (SSAE…FDEP), 721 to 772 (RSFK…GSPV), and 786 to 855 (KSLE…SSYL). A compositionally biased stretch (acidic residues) spans 34–43 (EQEEEEEEKE). Residues 208–227 (SPQTQQERQQLQQPASQPSP) show a composition bias toward low complexity. A compositionally biased stretch (basic and acidic residues) spans 443–453 (CRSEAKKDKRS). Over residues 567–579 (ASFTENSDTSRQI) the composition is skewed to polar residues. A compositionally biased stretch (basic and acidic residues) spans 721-736 (RSFKAHDSSSRTENPK). Over residues 737-748 (HSQYTSKSSDTG) the composition is skewed to polar residues. Over residues 790 to 801 (EASSISASDLSS) the composition is skewed to low complexity. Residues 830 to 855 (SVKTRSSWKSLEKSQSPQTSQVSSYL) show a composition bias toward polar residues.

As to quaternary structure, interacts (via middle region) with microtubules. As to expression, expressed in different cell lines (at protein level).

The protein resides in the cytoplasm. Its subcellular location is the cytoskeleton. It localises to the spindle pole. It is found in the microtubule organizing center. The protein localises to the centrosome. The protein resides in the midbody. In terms of biological role, microtubule-associated protein (MAP) that plays a role in the regulation of cell division; promotes microtubule stability and participates in the organization of the spindle midzone and normal progress of cytokinesis. This chain is Microtubule-associated protein 10 (MAP10), found in Homo sapiens (Human).